The primary structure comprises 412 residues: Peptidase T (412 aa).

Position 79 (histidine 79) interacts with Zn(2+). Residue aspartate 81 is part of the active site. Aspartate 142 contacts Zn(2+). The active-site Proton acceptor is glutamate 176. Residues glutamate 177, aspartate 199, and histidine 381 each contribute to the Zn(2+) site.

Belongs to the peptidase M20B family. Zn(2+) is required as a cofactor.

Its subcellular location is the cytoplasm. The catalysed reaction is Release of the N-terminal residue from a tripeptide.. Its function is as follows. Cleaves the N-terminal amino acid of tripeptides. In Exiguobacterium sp. (strain ATCC BAA-1283 / AT1b), this protein is Peptidase T.